We begin with the raw amino-acid sequence, 564 residues long: MTRLQDDFYDAINGEWAKTAVIPDDKPVTGGFMDLAEEIEDLMLSTTDKWLAGDGVPEDAILQNFVAYHRLAADYDKREAAGTEPARAYIDEIRNLASFEEYASKIADFELAGKPTYFPFGVAPDFMDARINVLWADGPGTILPDTTYYAEDHPQKADLLAKWRKAQEDLLAKFDFTEEEIKDLLDKVLDLDAVFAQYVLSNEESSEYAKLYHPYKWDDFKALVPELPLTDIFTKLIGQEPDQVIVPEERFWKAAKDIYTAANWDKLHALLILSAVRNTTPYLTDDIRVLAGAYQRALSGTPQAQDKKKAAYYLAQGPFNQAIGLWYAGQKFSPEAKADVEQKVVTMIEVYKNRLAQNDWLTPETRDKAIVKLNVIKPYIGYPDELPERYSRKIVDENLTLFENAQKLSLIDIAYSWSKWNQPVDYKEWGMPAHMVNAYYNPQKNLIVFPAAILQAPFYDLHQSSSANYGGIGAVIAHEISHAFDTNGASFDENGSLNNWWTEHDYQAFTERTQKVIDQFEGQDSYGAKVNGKLTVSENVADLGGIAAALEAAKKEADFSAEEF.

Residues 1–564 (MTRLQDDFYD…KEADFSAEEF (564 aa)) enclose the Peptidase M13 domain. H478 lines the Zn(2+) pocket. E479 is a catalytic residue. The Zn(2+) site is built by H482 and E538. The active-site Proton donor is the D542.

It belongs to the peptidase M13 family. The cofactor is Zn(2+).

The sequence is that of Putative zinc metalloproteinase in scaA 5'region from Streptococcus gordonii (strain Challis / ATCC 35105 / BCRC 15272 / CH1 / DL1 / V288).